Reading from the N-terminus, the 178-residue chain is Ribosome maturation factor RimM (178 aa).

One can recognise a PRC barrel domain in the interval 101–178; that stretch reads EGEFYWYQLQ…EMRVDWDADF (78 aa).

This sequence belongs to the RimM family. Binds ribosomal protein uS19.

The protein localises to the cytoplasm. In terms of biological role, an accessory protein needed during the final step in the assembly of 30S ribosomal subunit, possibly for assembly of the head region. Essential for efficient processing of 16S rRNA. May be needed both before and after RbfA during the maturation of 16S rRNA. It has affinity for free ribosomal 30S subunits but not for 70S ribosomes. This chain is Ribosome maturation factor RimM, found in Ectopseudomonas mendocina (strain ymp) (Pseudomonas mendocina).